We begin with the raw amino-acid sequence, 200 residues long: Holliday junction branch migration complex subunit RuvA (200 aa).

The tract at residues 1-64 (MFAYFKGSLV…EDALQLYGFF (64 aa)) is domain I. Residues 65–143 (KEEERQLFRL…KLPLVTPAAG (79 aa)) are domain II. Residues 143–147 (GKAAM) form a flexible linker region. The interval 148–200 (PSHHVKDDAVHALVTLGFSRLLAQKAVSALLEEKPEQSVEEVIKYALATIHNS) is domain III.

It belongs to the RuvA family. Homotetramer. Forms an RuvA(8)-RuvB(12)-Holliday junction (HJ) complex. HJ DNA is sandwiched between 2 RuvA tetramers; dsDNA enters through RuvA and exits via RuvB. An RuvB hexamer assembles on each DNA strand where it exits the tetramer. Each RuvB hexamer is contacted by two RuvA subunits (via domain III) on 2 adjacent RuvB subunits; this complex drives branch migration. In the full resolvosome a probable DNA-RuvA(4)-RuvB(12)-RuvC(2) complex forms which resolves the HJ.

It is found in the cytoplasm. Its function is as follows. The RuvA-RuvB-RuvC complex processes Holliday junction (HJ) DNA during genetic recombination and DNA repair, while the RuvA-RuvB complex plays an important role in the rescue of blocked DNA replication forks via replication fork reversal (RFR). RuvA specifically binds to HJ cruciform DNA, conferring on it an open structure. The RuvB hexamer acts as an ATP-dependent pump, pulling dsDNA into and through the RuvAB complex. HJ branch migration allows RuvC to scan DNA until it finds its consensus sequence, where it cleaves and resolves the cruciform DNA. This is Holliday junction branch migration complex subunit RuvA from Chlorobium phaeobacteroides (strain DSM 266 / SMG 266 / 2430).